The primary structure comprises 482 residues: Cobyric acid synthase (482 aa).

Residues 249–436 (QCKIACLALS…LHGLFTSDDF (188 aa)) form the GATase cobBQ-type domain. Catalysis depends on cysteine 331, which acts as the Nucleophile. Histidine 428 is a catalytic residue.

Belongs to the CobB/CobQ family. CobQ subfamily.

Its pathway is cofactor biosynthesis; adenosylcobalamin biosynthesis. Catalyzes amidations at positions B, D, E, and G on adenosylcobyrinic A,C-diamide. NH(2) groups are provided by glutamine, and one molecule of ATP is hydrogenolyzed for each amidation. The chain is Cobyric acid synthase from Bradyrhizobium diazoefficiens (strain JCM 10833 / BCRC 13528 / IAM 13628 / NBRC 14792 / USDA 110).